Here is a 99-residue protein sequence, read N- to C-terminus: Small ribosomal subunit protein bS20 (99 aa).

Belongs to the bacterial ribosomal protein bS20 family.

Binds directly to 16S ribosomal RNA. This chain is Small ribosomal subunit protein bS20, found in Cyanothece sp. (strain PCC 7425 / ATCC 29141).